The sequence spans 278 residues: Myb/SANT-like DNA-binding domain-containing protein 1 (278 aa).

The region spanning Arg-44–Ile-131 is the Myb-like domain. The interval Cys-139–Thr-167 is disordered. Over residues Pro-149–Ser-166 the composition is skewed to polar residues.

This is Myb/SANT-like DNA-binding domain-containing protein 1 (Msantd1) from Mus musculus (Mouse).